Reading from the N-terminus, the 302-residue chain is 33 kDa chaperonin (302 aa).

2 disulfide bridges follow: C247–C249 and C280–C283.

It belongs to the HSP33 family. Post-translationally, under oxidizing conditions two disulfide bonds are formed involving the reactive cysteines. Under reducing conditions zinc is bound to the reactive cysteines and the protein is inactive.

Its subcellular location is the cytoplasm. Its function is as follows. Redox regulated molecular chaperone. Protects both thermally unfolding and oxidatively damaged proteins from irreversible aggregation. Plays an important role in the bacterial defense system toward oxidative stress. The protein is 33 kDa chaperonin of Prochlorococcus marinus (strain AS9601).